Consider the following 140-residue polypeptide: Probable glycine cleavage system H protein 3 (140 aa).

A Lipoyl-binding domain is found at 29–110 (VVSIGVTDLG…PYDSWIVKIR (82 aa)). At Lys70 the chain carries N6-lipoyllysine.

This sequence belongs to the GcvH family. As to quaternary structure, the glycine cleavage system is composed of four proteins: P, T, L and H. It depends on (R)-lipoate as a cofactor.

In terms of biological role, the glycine cleavage system catalyzes the degradation of glycine. The H protein shuttles the methylamine group of glycine from the P protein to the T protein. The sequence is that of Probable glycine cleavage system H protein 3 from Saccharolobus solfataricus (strain ATCC 35092 / DSM 1617 / JCM 11322 / P2) (Sulfolobus solfataricus).